Here is a 137-residue protein sequence, read N- to C-terminus: Proofreading thioesterase EntH (137 aa).

Glu63 serves as the catalytic Nucleophile or proton acceptor.

Belongs to the thioesterase PaaI family. Homotetramer. Dimer of dimers. Interacts specifically with the aryl carrier protein (ArCP) domain of EntB.

The protein resides in the cytoplasm. The protein operates within siderophore biosynthesis; enterobactin biosynthesis. Functionally, required for optimal enterobactin synthesis. Acts as a proofreading enzyme that prevents EntB misacylation by hydrolyzing the thioester bound existing between EntB and wrongly charged molecules. This Cronobacter sakazakii (strain ATCC BAA-894) (Enterobacter sakazakii) protein is Proofreading thioesterase EntH.